A 158-amino-acid polypeptide reads, in one-letter code: NAD(P)H-quinone oxidoreductase subunit J, chloroplastic (158 aa).

Belongs to the complex I 30 kDa subunit family. NDH is composed of at least 16 different subunits, 5 of which are encoded in the nucleus.

Its subcellular location is the plastid. It is found in the chloroplast thylakoid membrane. The enzyme catalyses a plastoquinone + NADH + (n+1) H(+)(in) = a plastoquinol + NAD(+) + n H(+)(out). It catalyses the reaction a plastoquinone + NADPH + (n+1) H(+)(in) = a plastoquinol + NADP(+) + n H(+)(out). Functionally, NDH shuttles electrons from NAD(P)H:plastoquinone, via FMN and iron-sulfur (Fe-S) centers, to quinones in the photosynthetic chain and possibly in a chloroplast respiratory chain. The immediate electron acceptor for the enzyme in this species is believed to be plastoquinone. Couples the redox reaction to proton translocation, and thus conserves the redox energy in a proton gradient. This chain is NAD(P)H-quinone oxidoreductase subunit J, chloroplastic, found in Nandina domestica (Heavenly bamboo).